The following is a 271-amino-acid chain: L-aspartate dehydrogenase (271 aa).

Residues Ala-124 and Asn-192 each coordinate NAD(+). Residue His-222 is part of the active site.

This sequence belongs to the L-aspartate dehydrogenase family.

The catalysed reaction is L-aspartate + NADP(+) + H2O = oxaloacetate + NH4(+) + NADPH + H(+). The enzyme catalyses L-aspartate + NAD(+) + H2O = oxaloacetate + NH4(+) + NADH + H(+). It participates in cofactor biosynthesis; NAD(+) biosynthesis; iminoaspartate from L-aspartate (dehydrogenase route): step 1/1. Its function is as follows. Specifically catalyzes the NAD or NADP-dependent dehydrogenation of L-aspartate to iminoaspartate. The protein is L-aspartate dehydrogenase of Methanosarcina barkeri (strain Fusaro / DSM 804).